The primary structure comprises 517 residues: ATP synthase subunit beta (517 aa).

Low complexity-rich tracts occupy residues 1 to 22 (MAKAATPKTTAAAEAKPAAAKA) and 29 to 42 (AKTAAAKSDAAPKA). Residues 1–42 (MAKAATPKTTAAAEAKPAAAKAPAKKAPAKTAAAKSDAAPKA) form a disordered region. Residue 195–202 (GGAGVGKT) coordinates ATP.

The protein belongs to the ATPase alpha/beta chains family. In terms of assembly, F-type ATPases have 2 components, CF(1) - the catalytic core - and CF(0) - the membrane proton channel. CF(1) has five subunits: alpha(3), beta(3), gamma(1), delta(1), epsilon(1). CF(0) has three main subunits: a(1), b(2) and c(9-12). The alpha and beta chains form an alternating ring which encloses part of the gamma chain. CF(1) is attached to CF(0) by a central stalk formed by the gamma and epsilon chains, while a peripheral stalk is formed by the delta and b chains.

It localises to the cell inner membrane. It carries out the reaction ATP + H2O + 4 H(+)(in) = ADP + phosphate + 5 H(+)(out). In terms of biological role, produces ATP from ADP in the presence of a proton gradient across the membrane. The catalytic sites are hosted primarily by the beta subunits. This chain is ATP synthase subunit beta, found in Brucella anthropi (strain ATCC 49188 / DSM 6882 / CCUG 24695 / JCM 21032 / LMG 3331 / NBRC 15819 / NCTC 12168 / Alc 37) (Ochrobactrum anthropi).